Reading from the N-terminus, the 315-residue chain is tRNA dimethylallyltransferase (315 aa).

13–20 is a binding site for ATP; the sequence is GPTAVGKT. 15–20 lines the substrate pocket; that stretch reads TAVGKT. The interaction with substrate tRNA stretch occupies residues 38 to 41; it reads DSMQ.

It belongs to the IPP transferase family. As to quaternary structure, monomer. Requires Mg(2+) as cofactor.

It catalyses the reaction adenosine(37) in tRNA + dimethylallyl diphosphate = N(6)-dimethylallyladenosine(37) in tRNA + diphosphate. Catalyzes the transfer of a dimethylallyl group onto the adenine at position 37 in tRNAs that read codons beginning with uridine, leading to the formation of N6-(dimethylallyl)adenosine (i(6)A). The protein is tRNA dimethylallyltransferase of Staphylococcus saprophyticus subsp. saprophyticus (strain ATCC 15305 / DSM 20229 / NCIMB 8711 / NCTC 7292 / S-41).